The primary structure comprises 453 residues: Cysteine desulfurase, mitochondrial (453 aa).

Residues 1–34 (MASKVISATIRRTLTKPHGTFSRCRYLSTAAAAT) constitute a mitochondrion transit peptide. Pyridoxal 5'-phosphate-binding positions include 123 to 124 (AT), N203, Q231, and 251 to 253 (SAH). K254 is subject to N6-(pyridoxal phosphate)lysine. T291 serves as a coordination point for pyridoxal 5'-phosphate. The active-site Cysteine persulfide intermediate is the C377. C377 contributes to the [2Fe-2S] cluster binding site.

The protein belongs to the class-V pyridoxal-phosphate-dependent aminotransferase family. NifS/IscS subfamily. In terms of assembly, interacts with FH. Interacts with SUFE1. Requires pyridoxal 5'-phosphate as cofactor.

Its subcellular location is the mitochondrion. It catalyses the reaction (sulfur carrier)-H + L-cysteine = (sulfur carrier)-SH + L-alanine. With respect to regulation, threefold increase in the catalytic activity in the presence of FH (frataxin). 30-fold increase in the catalytic activity in the presence of SUFE1. Catalyzes the removal of elemental sulfur from cysteine to produce alanine. Supplies the inorganic sulfur for iron-sulfur (Fe-S) clusters. The sequence is that of Cysteine desulfurase, mitochondrial from Arabidopsis thaliana (Mouse-ear cress).